The primary structure comprises 832 residues: DNA polymerase I, thermostable (832 aa).

The region spanning 175 to 260 (RPDQWADYRA…DLPLEVDFAK (86 aa)) is the 5'-3' exonuclease domain. A polymerase region spans residues 410-832 (ERLFANLWGR…IGEDWLSAKE (423 aa)).

The protein belongs to the DNA polymerase type-A family.

It catalyses the reaction DNA(n) + a 2'-deoxyribonucleoside 5'-triphosphate = DNA(n+1) + diphosphate. Its function is as follows. In addition to polymerase activity, this DNA polymerase exhibits 5'-3' exonuclease activity. Unlikely to have 3'-5' exonuclease activity due to absence of a 3'-5' exonuclease domain. The polypeptide is DNA polymerase I, thermostable (polA) (Thermus aquaticus).